We begin with the raw amino-acid sequence, 85 residues long: Protein 19.2 (85 aa).

The chain is Protein 19.2 from Escherichia coli (Bacteriophage T7).